The chain runs to 130 residues: Small ribosomal subunit protein bS6 (130 aa).

Residues 100-130 (SPMVKAKDERRERREDFAEAGDDVEAGDSEE) are disordered. The segment covering 104–116 (KAKDERRERREDF) has biased composition (basic and acidic residues). The span at 117–130 (AEAGDDVEAGDSEE) shows a compositional bias: acidic residues.

The protein belongs to the bacterial ribosomal protein bS6 family.

In terms of biological role, binds together with bS18 to 16S ribosomal RNA. This Pectobacterium atrosepticum (strain SCRI 1043 / ATCC BAA-672) (Erwinia carotovora subsp. atroseptica) protein is Small ribosomal subunit protein bS6.